The primary structure comprises 378 residues: Erythronate-4-phosphate dehydrogenase (378 aa).

2 residues coordinate substrate: S45 and T66. Residues D146 and T175 each coordinate NAD(+). R208 is a catalytic residue. Position 232 (D232) interacts with NAD(+). E237 is an active-site residue. H254 functions as the Proton donor in the catalytic mechanism. An NAD(+)-binding site is contributed by G257. Residue Y258 participates in substrate binding.

The protein belongs to the D-isomer specific 2-hydroxyacid dehydrogenase family. PdxB subfamily. Homodimer.

It is found in the cytoplasm. The enzyme catalyses 4-phospho-D-erythronate + NAD(+) = (R)-3-hydroxy-2-oxo-4-phosphooxybutanoate + NADH + H(+). It functions in the pathway cofactor biosynthesis; pyridoxine 5'-phosphate biosynthesis; pyridoxine 5'-phosphate from D-erythrose 4-phosphate: step 2/5. Functionally, catalyzes the oxidation of erythronate-4-phosphate to 3-hydroxy-2-oxo-4-phosphonooxybutanoate. This chain is Erythronate-4-phosphate dehydrogenase, found in Pectobacterium atrosepticum (strain SCRI 1043 / ATCC BAA-672) (Erwinia carotovora subsp. atroseptica).